The sequence spans 626 residues: DNA mismatch repair protein MutL (626 aa).

This sequence belongs to the DNA mismatch repair MutL/HexB family.

Its function is as follows. This protein is involved in the repair of mismatches in DNA. It is required for dam-dependent methyl-directed DNA mismatch repair. May act as a 'molecular matchmaker', a protein that promotes the formation of a stable complex between two or more DNA-binding proteins in an ATP-dependent manner without itself being part of a final effector complex. The polypeptide is DNA mismatch repair protein MutL (Cellvibrio japonicus (strain Ueda107) (Pseudomonas fluorescens subsp. cellulosa)).